Consider the following 361-residue polypeptide: Transposase A from transposon Tn554 (361 aa).

Positions 23-120 constitute a Core-binding (CB) domain; that stretch reads YQLIEPVMKF…VVMSFLDYLS (98 aa). One can recognise a Tyr recombinase domain in the interval 163–351; it reads KQIRTLRSKE…SDQDMKNEFN (189 aa). Residues R198, K232, H302, R305, and H328 contribute to the active site. Y338 serves as the catalytic O-(3'-phospho-DNA)-tyrosine intermediate.

This sequence belongs to the 'phage' integrase family.

Functionally, one of three proteins encoded by transposon Tn554 required for its transposition. In Staphylococcus aureus (strain Mu50 / ATCC 700699), this protein is Transposase A from transposon Tn554 (tnpA1).